We begin with the raw amino-acid sequence, 113 residues long: Phosphorelay protein LuxU (113 aa).

The HPt domain maps to 18-113; that stretch reads GEENVPILVN…THQCYSDLVH (96 aa). H57 bears the Phosphohistidine mark.

As to quaternary structure, monomer.

Phosphorelay protein which receives sensory signals from a sensory kinase and transmit them to LuxO. At low cell density, a phosphoryl group is transferred from the sensory kinase, probably on His-57 and this phosphoryl group is further transferred to LuxO. The protein is Phosphorelay protein LuxU (luxU) of Vibrio cholerae serotype O1 (strain ATCC 39315 / El Tor Inaba N16961).